A 391-amino-acid polypeptide reads, in one-letter code: Histamine H4 receptor (391 aa).

Over 1–19 (MSESNGTDVLPLTAQVPLA) the chain is Extracellular. N-linked (GlcNAc...) asparagine glycosylation occurs at Asn5. The helical transmembrane segment at 20 to 40 (FLMSLLAFAITIGNAVVILAF) threads the bilayer. Topologically, residues 41–52 (VADRNLRHRSNY) are cytoplasmic. A helical transmembrane segment spans residues 53–73 (FFLNLAISDFFVGVISIPLYI). At 74 to 87 (PHTLFNWNFGSGIC) the chain is on the extracellular side. Cys87 and Cys166 are disulfide-bonded. Residues 88–108 (MFWLITDYLLCTASVYSIVLI) traverse the membrane as a helical segment. The Cytoplasmic segment spans residues 109 to 131 (SYDRYQSVSNAVRYRAQHTGILK). Residues 132-152 (IVAQMVAVWILAFLVNGPMIL) form a helical membrane-spanning segment. Over 153-174 (ASDSWKNSTNTEECEPGFVTEW) the chain is Extracellular. Asn159 is a glycosylation site (N-linked (GlcNAc...) asparagine). The helical transmembrane segment at 175 to 195 (YILAITAFLEFLLPVSLVVYF) threads the bilayer. The Cytoplasmic portion of the chain corresponds to 196-306 (SVQIYWSLWK…LLRGRKLARS (111 aa)). A helical membrane pass occupies residues 307-327 (LAVLLSAFAICWAPYCLFTIV). The Extracellular segment spans residues 328 to 343 (LSTYRRGERPKSIWYS). The chain crosses the membrane as a helical span at residues 344–364 (IAFWLQWFNSLINPFLYPLCH). The Cytoplasmic portion of the chain corresponds to 365–391 (RRFQKAFWKILCVTKQPAPSQTQSVSS).

Belongs to the G-protein coupled receptor 1 family. Interacts with TSPAN4.

It localises to the cell membrane. The H4 subclass of histamine receptors could mediate the histamine signals in peripheral tissues. Displays a significant level of constitutive activity (spontaneous activity in the absence of agonist). The protein is Histamine H4 receptor (Hrh4) of Rattus norvegicus (Rat).